The chain runs to 455 residues: Post-transcriptional regulator MTA (455 aa).

The interval 17–163 is disordered; that stretch reads DSVSSSEFDE…QVNCQRQDDD (147 aa). The span at 23–42 shows a compositional bias: acidic residues; that stretch reads EFDESRDDETDAPTLEDEQL. The span at 88 to 98 shows a compositional bias: low complexity; sequence SPLSRPRSPSP. 3 short sequence motifs (nuclear localization signal) span residues 101-107, 121-130, and 143-152; these read RYGKKIK, KRPRRRPRDR, and RAAPKRATRR. Zn(2+) contacts are provided by cysteine 333, histidine 423, cysteine 427, and cysteine 432. The segment at 333–432 adopts a CHC2-type zinc-finger fold; the sequence is CVFDKQSELA…HHSLCRNSEC (100 aa).

This sequence belongs to the HHV-1 ICP27 protein family. Homodimer. Homodimerization is required for transactivation. Interacts with host ALYREF. Associates in a complex with RNA, and host export factors NXF1/TAP and ALYREF; these interactions allow nuclear export of viral transcripts. Interacts with protein K-bZIP/K8; this interaction promotes viral gene expression during lytic infection. Interacts with host PABPC1. Interacts with host AGO2 and TNRC6A; these interactions inhibit host P-body formation. Interacts with PRKRA and EIF2AK2/PKR; these interactions inhibit host stress granule formation. In terms of processing, proteolytically cleaved by host caspase-7 (CASP7), leading to its inactivation, thereby preventing expression of viral lytic genes.

It localises to the host cytoplasm. Its subcellular location is the host nucleus. Post-transcriptional regulator that plays an essential role in the expression of viral lytic genes and productive viral replication. Possesses numerous activities that promote the expression of viral genes including enhancement of RNA stability, promotion of RNA splicing and stimulation of protein translation often via its ability to interact with different cellular cofactors. Stabilizes polyadenylated nuclear (PAN) RNA by cooperative binding to a 9-nt core of the MRE (MTA responsive element) together with host PABPC1. Functions as a viral splicing factor and promotes expression of intron-containing viral lytic genes. Protects viral transcripts from specific nuclear RNA decay pathways by preventing host MTREX recruitment that promotes unwinding and degradation of structured RNA substrates. Plays a role in the inhibition of host P-body formation by altering the scaffolding activity of TNRC6A at the initial stage thereby enhancing virus production. Also inhibits host stress granule formation by blocking autophosphorylation of EIF2AK2/PKR and its subsequent binding to dsRNA. The protein is Post-transcriptional regulator MTA of Human herpesvirus 8 type P (isolate GK18) (HHV-8).